The primary structure comprises 249 residues: MSAEAPKRQFGDRRRGGRRGGRRDGEEKGWTPVTKLGRLVKAGKITSVEQIYLHSLPVKEYQIIDLLLPDLKDDVMKIRSVQKQTRAGQRTRMKAVVVIGDSNGHVGLGIKTAKEVASAIKAAIVIAKLSIIPIRRGYWGSNLGQPHSLPCKVTGKCGSVAVRLIPAPRGKGIVASPVVKRLMQLAGVEDVYTSSSGSTRTTENTLKAAFAAIGNTYSFLTPNLWAETPLAASPLEVYAEEAAAGKKRY.

The segment covering 1–14 has biased composition (basic and acidic residues); the sequence is MSAEAPKRQFGDRR. Residues 1-29 are disordered; sequence MSAEAPKRQFGDRRRGGRRGGRRDGEEKG. The 64-residue stretch at 71–134 folds into the S5 DRBM domain; it reads LKDDVMKIRS…VIAKLSIIPI (64 aa).

The protein belongs to the universal ribosomal protein uS5 family. As to quaternary structure, component of the small ribosomal subunit. Mature ribosomes consist of a small (40S) and a large (60S) subunit. The 40S subunit contains about 32 different proteins and 1 molecule of RNA (18S). The 60S subunit contains 45 different proteins and 3 molecules of RNA (25S, 5.8S and 5S).

It localises to the cytoplasm. Component of the ribosome, a large ribonucleoprotein complex responsible for the synthesis of proteins in the cell. The small ribosomal subunit (SSU) binds messenger RNAs (mRNAs) and translates the encoded message by selecting cognate aminoacyl-transfer RNA (tRNA) molecules. The large subunit (LSU) contains the ribosomal catalytic site termed the peptidyl transferase center (PTC), which catalyzes the formation of peptide bonds, thereby polymerizing the amino acids delivered by tRNAs into a polypeptide chain. The nascent polypeptides leave the ribosome through a tunnel in the LSU and interact with protein factors that function in enzymatic processing, targeting, and the membrane insertion of nascent chains at the exit of the ribosomal tunnel. RPS2 is important for the assembly and function of the 40S ribosomal subunitand is nvolved in nucleolar processing of pre-18S ribosomal RNA and ribosome assembly. In Candida albicans (strain SC5314 / ATCC MYA-2876) (Yeast), this protein is Small ribosomal subunit protein uS5 (RPS21).